The sequence spans 193 residues: Cysteine and glycine-rich protein 1 (193 aa).

Positions 10-61 (CGVCQKTVYFAEEVQCEGSSFHKSCFLCLVCKKNLDSTTVAVHGEEIYCKSC) constitute an LIM zinc-binding 1 domain. The short motif at 64–69 (KKYGPK) is the Nuclear localization signal element. Phosphoserine is present on Ser-81. An N6-acetyllysine mark is found at Lys-84, Lys-112, Lys-131, Lys-137, and Lys-161. An LIM zinc-binding 2 domain is found at 119–170 (CPRCSQAVYAAEKVIGAGKSWHKSCFRCAKCGKGLESTTLADKDGEIYCKGC). Residue Ser-192 is modified to Phosphoserine.

In terms of assembly, interacts with ASCC1; ASCC2 and TRIP4.

The protein resides in the nucleus. In terms of biological role, could play a role in neuronal development. This is Cysteine and glycine-rich protein 1 (CSRP1) from Bos taurus (Bovine).